The sequence spans 136 residues: Large ribosomal subunit protein uL22 (136 aa).

The protein belongs to the universal ribosomal protein uL22 family. In terms of assembly, part of the 50S ribosomal subunit.

Its function is as follows. This protein binds specifically to 23S rRNA; its binding is stimulated by other ribosomal proteins, e.g. L4, L17, and L20. It is important during the early stages of 50S assembly. It makes multiple contacts with different domains of the 23S rRNA in the assembled 50S subunit and ribosome. Functionally, the globular domain of the protein is located near the polypeptide exit tunnel on the outside of the subunit, while an extended beta-hairpin is found that lines the wall of the exit tunnel in the center of the 70S ribosome. In Leifsonia xyli subsp. xyli (strain CTCB07), this protein is Large ribosomal subunit protein uL22.